We begin with the raw amino-acid sequence, 217 residues long: 3-dehydroquinate dehydratase (217 aa).

Residues 26–28 (EFR) and R59 each bind 3-dehydroquinate. Residue H114 is the Proton donor/acceptor of the active site. Catalysis depends on K140, which acts as the Schiff-base intermediate with substrate. R178 and Q201 together coordinate 3-dehydroquinate.

This sequence belongs to the type-I 3-dehydroquinase family. As to quaternary structure, homodimer.

It catalyses the reaction 3-dehydroquinate = 3-dehydroshikimate + H2O. It functions in the pathway metabolic intermediate biosynthesis; chorismate biosynthesis; chorismate from D-erythrose 4-phosphate and phosphoenolpyruvate: step 3/7. Its function is as follows. Involved in the third step of the chorismate pathway, which leads to the biosynthesis of aromatic amino acids. Catalyzes the cis-dehydration of 3-dehydroquinate (DHQ) and introduces the first double bond of the aromatic ring to yield 3-dehydroshikimate. The protein is 3-dehydroquinate dehydratase of Hydrogenobaculum sp. (strain Y04AAS1).